Here is a 192-residue protein sequence, read N- to C-terminus: Epoxyqueuosine reductase QueH (192 aa).

4 residues coordinate [4Fe-4S] cluster: Cys-9, Cys-10, Cys-87, and Cys-90. Cys-169 and Cys-171 are joined by a disulfide.

Belongs to the QueH family.

The enzyme catalyses epoxyqueuosine(34) in tRNA + AH2 = queuosine(34) in tRNA + A + H2O. It functions in the pathway tRNA modification; tRNA-queuosine biosynthesis. Its function is as follows. Catalyzes the conversion of epoxyqueuosine (oQ) to queuosine (Q), which is a hypermodified base found in the wobble positions of tRNA(Asp), tRNA(Asn), tRNA(His) and tRNA(Tyr). This is Epoxyqueuosine reductase QueH from Thermotoga maritima (strain ATCC 43589 / DSM 3109 / JCM 10099 / NBRC 100826 / MSB8).